Consider the following 350-residue polypeptide: MSKNKLSKGQQRRVNANHQRRLKTSKEKPDYDDNLFGEPDEGIVISRFGMHADVESADGDVHRCNIRRTIRSLVTGDRVVWRPGKPAAEGVNVKGIVEAVHERTSVLTRPDFYDGVKPIAANIDQIVIVSAILPELSLNIIDRYLVACETLQIEPIIVLNKIDLLDDEGMAFVNEQMDIYRNIGYRVLMVSSHTQDGLKPLEEALTGRISIFAGQSGVGKSSLLNALLGLQKEILTNDVSDNSGLGQHTTTAARLYHFPHGGDVIDSPGVREFGLWHLEPEQITQGFVEFHDYLGLCKYRDCKHDTDPGCAIREAVEEGKIAETRFENYHRILESMAQVKTRKNFSDTDD.

Positions Met-1–Asn-17 are enriched in polar residues. The disordered stretch occupies residues Met-1–Asp-33. In terms of domain architecture, CP-type G spans Thr-104–Phe-273. Residues Asn-160 to Asp-163 and Gly-214 to Ser-222 contribute to the GTP site. Zn(2+) contacts are provided by Cys-297, Cys-302, His-304, and Cys-310.

Belongs to the TRAFAC class YlqF/YawG GTPase family. RsgA subfamily. In terms of assembly, monomer. Associates with 30S ribosomal subunit, binds 16S rRNA. Requires Zn(2+) as cofactor.

It localises to the cytoplasm. Its function is as follows. One of several proteins that assist in the late maturation steps of the functional core of the 30S ribosomal subunit. Helps release RbfA from mature subunits. May play a role in the assembly of ribosomal proteins into the subunit. Circularly permuted GTPase that catalyzes slow GTP hydrolysis, GTPase activity is stimulated by the 30S ribosomal subunit. This is Small ribosomal subunit biogenesis GTPase RsgA from Shigella boydii serotype 18 (strain CDC 3083-94 / BS512).